A 208-amino-acid chain; its full sequence is MSTPHWFDQGSLVLASNNKGKVAEFEKLFEQLKLPVEIIPQGRLNIPDAIEDGLSFIENAIIKARHASKISGKPAMADDSGICVPVLGGAPGIYSARYAGEHGDDAANNAKLLNDLLPFRKNGEAIEGMFVCVLALVTHAEDPLPQIFQGIWHGEILEAPRGENGFGYDPLFWLPELQVSSAELSKEDKNKISHRGQAMQLFRESLQK.

Residue 16-21 (SNNKGK) participates in substrate binding. D79 (proton acceptor) is an active-site residue. D79 lines the Mg(2+) pocket. Substrate is bound by residues S80, 166 to 169 (FGYD), K189, and 194 to 195 (HR).

Belongs to the HAM1 NTPase family. Homodimer. Mg(2+) is required as a cofactor.

It carries out the reaction XTP + H2O = XMP + diphosphate + H(+). It catalyses the reaction dITP + H2O = dIMP + diphosphate + H(+). The catalysed reaction is ITP + H2O = IMP + diphosphate + H(+). Its function is as follows. Pyrophosphatase that catalyzes the hydrolysis of nucleoside triphosphates to their monophosphate derivatives, with a high preference for the non-canonical purine nucleotides XTP (xanthosine triphosphate), dITP (deoxyinosine triphosphate) and ITP. Seems to function as a house-cleaning enzyme that removes non-canonical purine nucleotides from the nucleotide pool, thus preventing their incorporation into DNA/RNA and avoiding chromosomal lesions. This is dITP/XTP pyrophosphatase from Acinetobacter baumannii (strain AB307-0294).